We begin with the raw amino-acid sequence, 874 residues long: Alanine--tRNA ligase (874 aa).

The Zn(2+) site is built by His564, His568, Cys665, and His669.

This sequence belongs to the class-II aminoacyl-tRNA synthetase family. Zn(2+) is required as a cofactor.

It is found in the cytoplasm. The enzyme catalyses tRNA(Ala) + L-alanine + ATP = L-alanyl-tRNA(Ala) + AMP + diphosphate. Functionally, catalyzes the attachment of alanine to tRNA(Ala) in a two-step reaction: alanine is first activated by ATP to form Ala-AMP and then transferred to the acceptor end of tRNA(Ala). Also edits incorrectly charged Ser-tRNA(Ala) and Gly-tRNA(Ala) via its editing domain. This Burkholderia vietnamiensis (strain G4 / LMG 22486) (Burkholderia cepacia (strain R1808)) protein is Alanine--tRNA ligase.